The primary structure comprises 484 residues: Zinc metalloproteinase-disintegrin jerdonitin (484 aa).

A signal peptide spans methionine 1 to serine 20. The propeptide occupies isoleucine 21–glutamate 191. A Pyrrolidone carboxylic acid modification is found at glutamine 192. The Peptidase M12B domain maps to arginine 194–proline 392. Ca(2+)-binding residues include glutamate 197 and aspartate 281. 3 cysteine pairs are disulfide-bonded: cysteine 305–cysteine 387, cysteine 345–cysteine 369, and cysteine 347–cysteine 352. Histidine 330 is a binding site for Zn(2+). The active site involves glutamate 331. Positions 334 and 340 each coordinate Zn(2+). Residues cysteine 387, asparagine 390, valine 402, asparagine 405, glutamate 409, glutamate 412, and aspartate 415 each coordinate Ca(2+). One can recognise a Disintegrin domain in the interval proline 400–alanine 484. 7 cysteine pairs are disulfide-bonded: cysteine 403/cysteine 422, cysteine 414/cysteine 432, cysteine 416/cysteine 427, cysteine 426/cysteine 449, cysteine 440/cysteine 446, cysteine 445/cysteine 470, and cysteine 458/cysteine 477. A Cell attachment site motif is present at residues arginine 462 to aspartate 464.

This sequence belongs to the venom metalloproteinase (M12B) family. P-II subfamily. P-IIb sub-subfamily. As to quaternary structure, monomer. The cofactor is Zn(2+). In terms of processing, the N-terminus is blocked. As to expression, expressed by the venom gland.

The protein localises to the secreted. Fibrinogenolytic activity is completely inhibited by EDTA, but not by PMSF. Functionally, snake venom zinc metalloproteinase that inhibits ADP-induced human platelet aggregation (IC(50)=120 nM (native) and IC(50)=248 nM (recombinant)). May act by binding to the receptor GPIIb/GPIIIa (ITGA2B/ITGB3) on the platelet surface. Degrades the alpha-chain of fibrinogen completely and the beta-chain partially, leaving the gamma chain intact. Also inhibits the growth of several cell lines, including human liver cancer cells (Bel7402), human leukemia cells (K562) and human gastric carcinoma cells (BGC823). This chain is Zinc metalloproteinase-disintegrin jerdonitin, found in Protobothrops jerdonii (Jerdon's pitviper).